A 104-amino-acid chain; its full sequence is Large ribosomal subunit protein bL21 (104 aa).

The protein belongs to the bacterial ribosomal protein bL21 family. As to quaternary structure, part of the 50S ribosomal subunit. Contacts protein L20.

This protein binds to 23S rRNA in the presence of protein L20. The sequence is that of Large ribosomal subunit protein bL21 from Caldanaerobacter subterraneus subsp. tengcongensis (strain DSM 15242 / JCM 11007 / NBRC 100824 / MB4) (Thermoanaerobacter tengcongensis).